A 331-amino-acid chain; its full sequence is Nucleotide sugar transporter SLC35B4 (331 aa).

11 helical membrane passes run 4-24, 30-50, 59-79, 92-112, 124-144, 153-173, 201-221, 229-249, 251-267, 268-288, and 294-314; these read AFAV…LELL, GCGN…GFLF, PAIP…VSVV, LHMI…IIIL, IALV…QVTV, GFQA…ALLM, ALPL…VVLF, VPVI…NVVT, YVCI…CTSL, TVTL…ILYF, and MWHW…TEVW. The short motif at 326-331 is the Mediates endoplasmic reticulum retention element; that stretch reads KDDKKD.

It belongs to the nucleotide-sugar transporter family. SLC35B subfamily.

It localises to the endoplasmic reticulum membrane. The catalysed reaction is UDP-N-acetyl-alpha-D-glucosamine(in) + UDP-alpha-D-glucuronate(out) = UDP-N-acetyl-alpha-D-glucosamine(out) + UDP-alpha-D-glucuronate(in). It catalyses the reaction UDP-alpha-D-xylose(in) + UDP-alpha-D-glucuronate(out) = UDP-alpha-D-xylose(out) + UDP-alpha-D-glucuronate(in). Its function is as follows. Antiporter that transports nucleotide sugars across the endoplasmic reticulum (ER) membrane in exchange for another nucleotide sugar. May couple UDP-alpha-D-glucuronate (UDP-GlcA) or UDP-alpha-D-xylose (UDP-Xyl) efflux to UDP-alpha-D-glucuronate (UDP-GlcA) influx into the ER lumen, which in turn stimulates glucuronidation and excretion of endobiotics and xenobiotics. The polypeptide is Nucleotide sugar transporter SLC35B4 (Slc35b4) (Mus musculus (Mouse)).